The primary structure comprises 190 residues: UPF0301 protein Rpic_0619 (190 aa).

Belongs to the UPF0301 (AlgH) family.

This is UPF0301 protein Rpic_0619 from Ralstonia pickettii (strain 12J).